We begin with the raw amino-acid sequence, 930 residues long: Inter-alpha-trypsin inhibitor heavy chain H4 (930 aa).

The first 28 residues, 1–28 (MKPPRPVRTCSKVLVLLSLLAIHQTTTA), serve as a signal peptide directing secretion. Residues 29–148 (EKNGIDIYSL…KITFELVYEE (120 aa)) form the VIT domain. Asn-81 and Asn-207 each carry an N-linked (GlcNAc...) asparagine glycan. One can recognise a VWFA domain in the interval 272-432 (PKNVVFVIDK…YAFLEKLALD (161 aa)). Asn-274 is a glycosylation site (N-linked (GlcNAc...) asparagine; atypical). 2 N-linked (GlcNAc...) asparagine glycosylation sites follow: Asn-517 and Asn-577. The interval 595-618 (KPDDQEQSQVAEKPMEGESRNRNV) is disordered. The proline-rich (PRR) potential bioactive peptide stretch occupies residues 658–688 (MNFRPGVLSSRQLGLPGPPDVPDHAAYHPFR). A propeptide spans 662 to 688 (PGVLSSRQLGLPGPPDVPDHAAYHPFR) (potentially active peptide). O-linked (GalNAc...) threonine glycosylation is found at Thr-719, Thr-720, and Thr-722. The O-glycosylated at three sites stretch occupies residues 719-725 (TTMTTQT). Cys-747 and Cys-925 are joined by a disulfide.

This sequence belongs to the ITIH family. In terms of assembly, interacts (via C-terminus) with DNAJC1 (via SANT 2 domain); this interaction protects ITIH4 against cleavage by kallikrein in vitro. In terms of processing, cleaved by plasma kallikrein to yield 100 kDa and 35 kDa fragments, and the resulting 100 kDa fragment is further converted to a 70 kDa fragment. Post-translationally, N- and O-glycosylated. In urine, O-linked glycosylation on threonine residues in the region from Thr-719 to Thr-725 consists of core 1 or possibly core 8 glycans. Mainly Hex(HexNAc)(2), but also some Hex(3)(HexNAc)(3). N-glycosylated but not O-glycosylated in plasma. Liver specific.

Its subcellular location is the secreted. Type II acute-phase protein (APP) involved in inflammatory responses to trauma. May also play a role in liver development or regeneration. This is Inter-alpha-trypsin inhibitor heavy chain H4 (ITIH4) from Homo sapiens (Human).